The chain runs to 2215 residues: Unconventional myosin-VIIa (2215 aa).

One can recognise a Myosin motor domain in the interval 65–741; the sequence is HGVEDMIRLG…HDMLLEVERD (677 aa). Position 158–165 (158–165) interacts with ATP; it reads GESGAGKT. The actin-binding stretch occupies residues 632–639; that stretch reads FVRCIKPN. 5 IQ domains span residues 745-765, 768-788, 791-811, 814-834, and 837-857; these read TDRV…SNFL, KSAA…KNYE, RLGF…KQYR, RQRI…KAFR, and LWAV…RLHR. The segment at 858–935 is SAH; the sequence is RLRVEYQRRL…LEQMEKARHE (78 aa). In terms of domain architecture, MyTH4 1 spans 1017-1253; it reads YTRRPLKQPL…PSWLELQATK (237 aa). Positions 1258–1602 constitute an FERM 1 domain; the sequence is IMLPVTFMDG…LVVTFLEGLR (345 aa). The residue at position 1563 (Thr-1563) is a Phosphothreonine. A Phosphoserine modification is found at Ser-1569. Thr-1571 is modified (phosphothreonine). The SH3 domain maps to 1603 to 1672; it reads KRSKYVVALQ…PTDCVYVMPT (70 aa). The region spanning 1747–1896 is the MyTH4 2 domain; it reads HTREPLKQAL…PHLVEVEAIQ (150 aa). Residues 1902–2205 form the FERM 2 domain; sequence IFHKVYFPDD…SYISQMLTAM (304 aa).

The protein belongs to the TRAFAC class myosin-kinesin ATPase superfamily. Myosin family. Might homodimerize in a two headed molecule through the formation of a coiled-coil rod. Identified in a complex with USH1C and USH1G. Interacts with MYRIP. Interacts with RPE65. Interacts with CIB2. May interact with CALM. Interacts with WHRN. Interacts with PLEKHB1 (via PH domain). Interacts with PCDH15. Interacts with TWF2. Interacts with USH1G. Interacts with MYH9. Interacts (via MyTH4-FERM domains) with cytoplasmic regions of ADGRV1 and USH2A. Interacts with PDZD7 (via MyTH4-FERM domains). Interacts with CALML4. In terms of tissue distribution, detected in mechanosensory stereocilia of cochlea hair cells (at protein level). Expressed in the retina, cochlea, kidney and liver.

Its subcellular location is the cytoplasm. The protein resides in the cell cortex. The protein localises to the cytoskeleton. It localises to the synapse. Its function is as follows. Myosins are actin-based motor molecules with ATPase activity. Unconventional myosins serve in intracellular movements. Their highly divergent tails bind to membranous compartments, which are then moved relative to actin filaments. In the retina, plays an important role in the renewal of the outer photoreceptor disks. Plays an important role in the distribution and migration of retinal pigment epithelial (RPE) melanosomes and phagosomes, and in the regulation of opsin transport in retinal photoreceptors. Mediates intracellular transport of RPE65 in the retina pigment epithelium. In the inner ear, plays an important role in differentiation, morphogenesis and organization of cochlear hair cell bundles. Motor protein that is a part of the functional network formed by USH1C, USH1G, CDH23 and MYO7A that mediates mechanotransduction in cochlear hair cells. Required for normal hearing. Involved in hair-cell vesicle trafficking of aminoglycosides, which are known to induce ototoxicity. This Mus musculus (Mouse) protein is Unconventional myosin-VIIa (Myo7a).